The following is a 313-amino-acid chain: Tyrosine recombinase XerC (313 aa).

Residues 1 to 85 enclose the Core-binding (CB) domain; that stretch reads MNDQVEAFLR…AVKSFFAFLT (85 aa). Residues 106–291 enclose the Tyr recombinase domain; the sequence is DLPRALTPHQ…NHASSAQPVR (186 aa). Residues Arg147, Lys171, His243, Arg246, and His269 contribute to the active site. Tyr278 (O-(3'-phospho-DNA)-tyrosine intermediate) is an active-site residue.

This sequence belongs to the 'phage' integrase family. XerC subfamily. In terms of assembly, forms a cyclic heterotetrameric complex composed of two molecules of XerC and two molecules of XerD.

It localises to the cytoplasm. Its function is as follows. Site-specific tyrosine recombinase, which acts by catalyzing the cutting and rejoining of the recombining DNA molecules. The XerC-XerD complex is essential to convert dimers of the bacterial chromosome into monomers to permit their segregation at cell division. It also contributes to the segregational stability of plasmids. The polypeptide is Tyrosine recombinase XerC (Roseiflexus sp. (strain RS-1)).